A 287-amino-acid polypeptide reads, in one-letter code: Ribonuclease Z (287 aa).

The Zn(2+) site is built by His64, His66, Asp68, His69, His124, Asp191, and His250. Asp68 functions as the Proton acceptor in the catalytic mechanism.

The protein belongs to the RNase Z family. Homodimer. Zn(2+) is required as a cofactor.

It carries out the reaction Endonucleolytic cleavage of RNA, removing extra 3' nucleotides from tRNA precursor, generating 3' termini of tRNAs. A 3'-hydroxy group is left at the tRNA terminus and a 5'-phosphoryl group is left at the trailer molecule.. Zinc phosphodiesterase, which displays some tRNA 3'-processing endonuclease activity. Probably involved in tRNA maturation, by removing a 3'-trailer from precursor tRNA. This is Ribonuclease Z from Pyrobaculum neutrophilum (strain DSM 2338 / JCM 9278 / NBRC 100436 / V24Sta) (Thermoproteus neutrophilus).